A 495-amino-acid chain; its full sequence is Sialin (495 aa).

Basic and acidic residues predominate over residues 1-18; that stretch reads MRSPVRDLARNDGEESTD. Positions 1 to 24 are disordered; it reads MRSPVRDLARNDGEESTDRTPLLP. Over 1–41 the chain is Cytoplasmic; the sequence is MRSPVRDLARNDGEESTDRTPLLPGAPRAEAAPVCCSARYN. Ser3 carries the post-translational modification Phosphoserine. Positions 22-23 match the Dileucine internalization motif motif; sequence LL. A helical membrane pass occupies residues 42-62; the sequence is LAILAFFGFFIVYALRVNLSV. The Lumenal portion of the chain corresponds to 63 to 109; the sequence is ALVDMVDSNTTLEDNRTSKACPEHSAPIKVHHNQTGKKYQWDAETQG. N-linked (GlcNAc...) asparagine glycosylation is found at Asn71, Asn77, and Asn95. The helical transmembrane segment at 110–130 threads the bilayer; it reads WILGSFFYGYIITQIPGGYVA. Topologically, residues 131–136 are cytoplasmic; sequence SKIGGK. Residues 137–157 form a helical membrane-spanning segment; it reads MLLGFGILGTAVLTLFTPIAA. A topological domain (lumenal) is located at residue Asp158. Residues 159-179 traverse the membrane as a helical segment; that stretch reads LGVGPLIVLRALEGLGEGVTF. The Cytoplasmic portion of the chain corresponds to 180-200; it reads PAMHAMWSSWAPPLERSKLLS. Residues 201 to 221 form a helical membrane-spanning segment; it reads ISYAGAQLGTVISLPLSGIIC. At 222 to 227 the chain is on the lumenal side; sequence YYMNWT. A helical membrane pass occupies residues 228–248; it reads YVFYFFGTIGIFWFLLWIWLV. At 249–279 the chain is on the cytoplasmic side; it reads SDTPQKHKRISHYEKEYILSSLRNQLSSQKS. A helical membrane pass occupies residues 280-300; it reads VPWVPILKSLPLWAIVVAHFS. The Lumenal portion of the chain corresponds to 301–328; sequence YNWTFYTLLTLLPTYMKEILRFNVQENG. The helical transmembrane segment at 329–349 threads the bilayer; the sequence is FLSSLPYLGSWLCMILSGQAA. Over 350–365 the chain is Cytoplasmic; sequence DNLRAKWNFSTLCVRR. A helical transmembrane segment spans residues 366 to 386; it reads IFSLIGMIGPAVFLVAAGFIG. Over 387 to 391 the chain is Lumenal; the sequence is CDYSL. A helical transmembrane segment spans residues 392-412; it reads AVAFLTISTTLGGFCSSGFSI. Residues 413–423 are Cytoplasmic-facing; that stretch reads NHLDIAPSYAG. Residues 424-444 traverse the membrane as a helical segment; it reads ILLGITNTFATIPGMVGPVIA. Over 445–457 the chain is Lumenal; that stretch reads KSLTPDNTVGEWQ. The helical transmembrane segment at 458 to 478 threads the bilayer; it reads TVFYIAAAINVFGAIFFTLFA. At 479–495 the chain is on the cytoplasmic side; sequence KGEVQNWALNDHHGHRH.

The protein belongs to the major facilitator superfamily. Sodium/anion cotransporter family. As to expression, in the adult, detected in placenta, kidney and pancreas. Abundant in the endothelial cells of tumors from ovary, colon, breast and lung, but is not detected in endothelial cells from the corresponding normal tissues. Highly expressed in salivary glands and liver, with lower levels of expression in brain, spleen kidney, muscle and pancreas. Expressed in acinar cells of salivary glands (at protein level).

It localises to the basolateral cell membrane. The protein localises to the cytoplasmic vesicle. The protein resides in the secretory vesicle. It is found in the synaptic vesicle membrane. Its subcellular location is the lysosome membrane. It catalyses the reaction N-acetylneuraminate(in) + H(+)(in) = N-acetylneuraminate(out) + H(+)(out). It carries out the reaction D-glucuronate(out) + H(+)(out) = D-glucuronate(in) + H(+)(in). The enzyme catalyses 2 nitrate(out) + H(+)(out) = 2 nitrate(in) + H(+)(in). The catalysed reaction is L-aspartate(out) = L-aspartate(in). It catalyses the reaction L-glutamate(out) = L-glutamate(in). It carries out the reaction N-acetyl-L-aspartyl-L-glutamate(out) = N-acetyl-L-aspartyl-L-glutamate(in). In terms of biological role, multifunctional anion transporter that operates via two distinct transport mechanisms, namely proton-coupled anion cotransport and membrane potential-dependent anion transport. Electroneutral proton-coupled acidic monosaccharide symporter, with a sugar to proton stoichiometry of 1:1. Exports glucuronic acid and free sialic acid derived from sialoglycoconjugate degradation out of lysosomes, driven by outwardly directed lysosomal pH gradient. May regulate lysosome function and metabolism of sialylated conjugates that impact oligodendrocyte lineage differentiation and myelinogenesis in the central nervous system. Electrogenic proton-coupled nitrate symporter that transports nitrate ions across the basolateral membrane of salivary gland acinar cells, with nitrate to proton stoichiometry of 2:1. May contribute to nitrate clearance from serum by salivary glands, where it is further concentrated and secreted in the saliva. Uses membrane potential to drive the uptake of acidic amino acids and peptides into synaptic vesicles. Responsible for synaptic vesicular storage of L-aspartate and L-glutamate in pinealocytes as well as vesicular uptake of N-acetyl-L-aspartyl-L-glutamate neuropeptide, relevant to aspartegic-associated glutamatergic neurotransmission and activation of metabotropic receptors that inhibit subsequent transmitter release. Functionally, receptor for CM101, a polysaccharide produced by group B Streptococcus with antipathoangiogenic properties. The polypeptide is Sialin (SLC17A5) (Homo sapiens (Human)).